Here is a 460-residue protein sequence, read N- to C-terminus: Ammonium transporter Rh type C (460 aa).

The Cytoplasmic portion of the chain corresponds to 1–9 (MVWNTNLRW). The helical transmembrane segment at 10–30 (RLPVTCLLLQVALVVLFGVFV) threads the bilayer. Over 31-61 (RYDMDADPHWIDKKEAENSTSDMENEFYYRY) the chain is Extracellular. Residue Asn48 is glycosylated (N-linked (GlcNAc...) asparagine). The chain crosses the membrane as a helical span at residues 62-82 (PSFQDVHVMIFVGFGFLMTFL). At 83 to 90 (QRYGYSSV) the chain is on the cytoplasmic side. The helical transmembrane segment at 91-111 (GFNFLLAAFGIQWALLLQGWF) threads the bilayer. Topologically, residues 112 to 125 (HSYYRGYIRVGVEN) are extracellular. A helical transmembrane segment spans residues 126-145 (LINADFCVGSVCVAFGAVLG). Residues 146 to 151 (KVSPVQ) lie on the Cytoplasmic side of the membrane. Residues 152–174 (LLIMTLFQVTLFSVNEFILLNLL) traverse the membrane as a helical segment. Residues 175–179 (EVKDA) lie on the Extracellular side of the membrane. The chain crosses the membrane as a helical span at residues 180–200 (GGSMTIHTFGAYFGLTVTWIL). Over 201–219 (YRPGLHQSKERQSSVYHSD) the chain is Cytoplasmic. Residues 220–240 (LFAMIGTLFLWMYWPSFNSAV) form a helical membrane-spanning segment. Topologically, residues 241–251 (SNHGDAQHRAA) are extracellular. A helical membrane pass occupies residues 252–272 (INTYCSLAACVLTSVALSSAL). Topologically, residues 273–285 (HKKGKLDMVHIQN) are cytoplasmic. A helical membrane pass occupies residues 286–306 (ATLAGGVAVGTAAEMMLMPYG). Position 307 (Ser307) is a topological domain, extracellular. A helical transmembrane segment spans residues 308 to 328 (LIVGFICGIVSTLGFVYLTPF). Over 329–339 (LESRLRVQDTC) the chain is Cytoplasmic. Residues 340–360 (GIHNLHGIPGIIGAIVGAVTA) traverse the membrane as a helical segment. Topologically, residues 361–396 (SCANTDVYGVNGLTQAFGFDGFKTNRTPSMQGKFQA) are extracellular. Residues 397–417 (AGLFVSLAMALVGGIIVGIIL) traverse the membrane as a helical segment. The Cytoplasmic segment spans residues 418–460 (KLPFWGQPADENCFEDAIYWEMPEEPKSTVLHPEDSTLKPSEP).

Belongs to the ammonium transporter (TC 2.A.49) family. Rh subfamily. As to quaternary structure, homotrimer. Post-translationally, N-glycosylated.

Its subcellular location is the apical cell membrane. The catalysed reaction is NH4(+)(in) = NH4(+)(out). It catalyses the reaction methylamine(out) = methylamine(in). It carries out the reaction CO2(out) = CO2(in). In terms of biological role, ammonium transporter involved in the maintenance of acid-base homeostasis. Transports ammonium and its related derivative methylammonium across the plasma membrane of epithelial cells likely contributing to renal transepithelial ammonia transport and ammonia metabolism. Postulated to primarily mediate an electroneutral bidirectional transport of NH3 ammonia species according to a mechanism that implies interaction of an NH4(+) ion with acidic residues of the pore entry followed by dissociation of NH4(+) into NH3 and H(+). As a result NH3 transits through the central pore and is protonated on the extracellular side reforming NH4(+). May act as a CO2 channel providing for renal acid secretion. This chain is Ammonium transporter Rh type C (RHCG), found in Canis lupus familiaris (Dog).